The following is a 338-amino-acid chain: Extracellular globin (338 aa).

The first 18 residues, 1 to 18 (MRSLLLLSIVFFVVTVSA), serve as a signal peptide directing secretion. N-linked (GlcNAc...) asparagine glycosylation is present at Asn-19. 2 consecutive Globin domains span residues 25-167 (CMKS…KHGR) and 174-316 (CMRS…RHGK). Positions 82 and 114 each coordinate heme b. Asn-216 is a glycosylation site (N-linked (GlcNAc...) asparagine). Heme b contacts are provided by Gln-231 and His-263. Residues 313 to 338 (RHGKEHHEHKEEHKEEHKEEHKEEQH) are disordered.

It belongs to the globin family. In terms of assembly, homooctamer.

It is found in the secreted. It localises to the extracellular space. Functionally, has an extremely high oxygen affinity. In a vacuum, it takes several minutes to release its oxygen compared to milliseconds for a normal globin. Could be used as an oxygen scavenger for sterol biosynthesis. The polypeptide is Extracellular globin (Ascaris suum (Pig roundworm)).